We begin with the raw amino-acid sequence, 424 residues long: Tyrosine--tRNA ligase (424 aa).

L-tyrosine is bound at residue Tyr33. A 'HIGH' region motif is present at residues 38–47 (PSADSLHIGH). L-tyrosine-binding residues include Tyr170 and Gln174. Residues 230-234 (KFGKT) carry the 'KMSKS' region motif. Residue Lys233 coordinates ATP. Residues 357-424 (MSLIDALVRC…RRHYHLIRLV (68 aa)) enclose the S4 RNA-binding domain.

It belongs to the class-I aminoacyl-tRNA synthetase family. TyrS type 1 subfamily. Homodimer.

Its subcellular location is the cytoplasm. The enzyme catalyses tRNA(Tyr) + L-tyrosine + ATP = L-tyrosyl-tRNA(Tyr) + AMP + diphosphate + H(+). Functionally, catalyzes the attachment of tyrosine to tRNA(Tyr) in a two-step reaction: tyrosine is first activated by ATP to form Tyr-AMP and then transferred to the acceptor end of tRNA(Tyr). This Roseiflexus castenholzii (strain DSM 13941 / HLO8) protein is Tyrosine--tRNA ligase.